The following is a 282-amino-acid chain: MSAGTLFVVATPIGNLDDISPRALRVLREVALVAAEDTRHSIRLFQHFGIETPLAACHEHNEREEGGRFISRLQGGEDVALISDAGTPLISDPGFHLVRQAQALGIRVVPVPGSCALIAALSAAGLPSDRFIFEGFLPAKAAGRRSRLQAVQEEPRTLIFYEAPHRLLESLADMRDVFGGERRAVLARELSKTFETIRSLPLAELHDWVASDSNQQRGECVVLVAGWQAPEGEESIGAEALRVLDLLLAELPLKKAAALAAEITGVRKNLLYQQALQRQGKS.

This sequence belongs to the methyltransferase superfamily. RsmI family.

The protein localises to the cytoplasm. It carries out the reaction cytidine(1402) in 16S rRNA + S-adenosyl-L-methionine = 2'-O-methylcytidine(1402) in 16S rRNA + S-adenosyl-L-homocysteine + H(+). Catalyzes the 2'-O-methylation of the ribose of cytidine 1402 (C1402) in 16S rRNA. This is Ribosomal RNA small subunit methyltransferase I from Pseudomonas aeruginosa (strain ATCC 15692 / DSM 22644 / CIP 104116 / JCM 14847 / LMG 12228 / 1C / PRS 101 / PAO1).